The chain runs to 445 residues: Clusterin (445 aa).

Positions 1-22 are cleaved as a signal peptide; that stretch reads MMKTLLLLVGLLLTWDNGRVLG. Positions 78 to 81 match the Nuclear localization signal motif; the sequence is KKKK. N-linked (GlcNAc...) asparagine glycosylation is found at Asn86 and Asn103. Disulfide bonds link Cys102–Cys309, Cys113–Cys301, Cys116–Cys298, Cys121–Cys291, and Cys129–Cys281. Phosphoserine is present on Ser133. 5 N-linked (GlcNAc...) asparagine glycosylation sites follow: Asn145, Asn277, Asn287, Asn350, and Asn370. Ser392 is modified (phosphoserine). The Nuclear localization signal motif lies at 439–443; it reads RQKHR.

The protein belongs to the clusterin family. Antiparallel disulfide-linked heterodimer of an alpha chain and a beta chain. Self-associates and forms higher oligomers. Interacts with a broad range of misfolded proteins, including APP, APOC2 and LYZ. Slightly acidic pH promotes interaction with misfolded proteins. Forms high-molecular weight oligomers upon interaction with misfolded proteins. Interacts with APOA1, LRP2, CLUAP1 and PON1. Interacts with the complement membrane attack complex. Interacts (via alpha chain) with XRCC6. Interacts with SYVN1, COMMD1, BTRC, CUL1 and with ubiquitin and SCF (SKP1-CUL1-F-box protein) E3 ubiquitin-protein ligase complexes. Interacts (via alpha chain) with BAX in stressed cells, where BAX undergoes a conformation change leading to association with the mitochondrial membrane. Does not interact with BAX in unstressed cells. Found in a complex with LTF, CLU, EPPIN and SEMG1. Interacts (immaturely glycosylated pre-secreted form) with HSPA5; this interaction promotes CLU stability and facilitates stress-induced CLU retrotranslocation from the secretory pathway to the mitochondria, thereby reducing stress-induced apoptosis by stabilizing mitochondrial membrane integrity. Interacts with BCL2L1; this interaction releases and activates BAX and promotes cell death. Interacts with TGFBR2 and ACVR1. Interacts (secreted form) with STMN3; this interaction may act as an important modulator during neuronal differentiation. Interacts with VLDLR and LRP8. In terms of processing, proteolytically cleaved on its way through the secretory system, probably within the Golgi lumen. Proteolytic cleavage is not necessary for its chaperone activity. All non-secreted forms are not proteolytically cleaved. Chaperone activity of uncleaved forms is dependent on a non-reducing environment. This proteolytic maturation is disulfide bond formation dependent. Polyubiquitinated, leading to proteasomal degradation. Under cellular stress, the intracellular level of cleaved form is reduced due to proteasomal degradation. Post-translationally, heavily N-glycosylated. About 30% of the protein mass is comprised of complex N-linked carbohydrate. Endoplasmic reticulum (ER) stress induces changes in glycosylation status and increases level of hypoglycosylated forms. Core carbohydrates are essential for chaperone activity. Non-secreted forms are hypoglycosylated or unglycosylated.

The protein resides in the secreted. The protein localises to the nucleus. It localises to the cytoplasm. It is found in the mitochondrion membrane. Its subcellular location is the cytosol. The protein resides in the microsome. The protein localises to the endoplasmic reticulum. It localises to the mitochondrion. It is found in the perinuclear region. Its subcellular location is the cytoplasmic vesicle. The protein resides in the secretory vesicle. The protein localises to the chromaffin granule. In terms of biological role, functions as extracellular chaperone that prevents aggregation of non native proteins. Prevents stress-induced aggregation of blood plasma proteins. Inhibits formation of amyloid fibrils by APP, APOC2, B2M, CALCA, CSN3, SNCA and aggregation-prone LYZ variants (in vitro). Does not require ATP. Maintains partially unfolded proteins in a state appropriate for subsequent refolding by other chaperones, such as HSPA8/HSC70. Does not refold proteins by itself. Binding to cell surface receptors triggers internalization of the chaperone-client complex and subsequent lysosomal or proteasomal degradation. When secreted, protects cells against apoptosis and against cytolysis by complement: inhibits assembly of the complement membrane attack complex (MAC) by preventing polymerization of C9 pore component of the MAC complex. Intracellular forms interact with ubiquitin and SCF (SKP1-CUL1-F-box protein) E3 ubiquitin-protein ligase complexes and promote the ubiquitination and subsequent proteasomal degradation of target proteins. Promotes proteasomal degradation of COMMD1 and IKBKB. Modulates NF-kappa-B transcriptional activity. Following stress, promotes apoptosis. Inhibits apoptosis when associated with the mitochondrial membrane by interference with BAX-dependent release of cytochrome c into the cytoplasm. Plays a role in the regulation of cell proliferation. An intracellular form suppresses stress-induced apoptosis by stabilizing mitochondrial membrane integrity through interaction with HSPA5. Secreted form does not affect caspase or BAX-mediated intrinsic apoptosis and TNF-induced NF-kappa-B-activity. Secreted form act as an important modulator during neuronal differentiation through interaction with STMN3. Plays a role in the clearance of immune complexes that arise during cell injury. The chain is Clusterin (CLU) from Canis lupus familiaris (Dog).